Here is a 236-residue protein sequence, read N- to C-terminus: 2,3,4,5-tetrahydropyridine-2,6-dicarboxylate N-acetyltransferase (236 aa).

It belongs to the transferase hexapeptide repeat family. DapH subfamily.

The enzyme catalyses (S)-2,3,4,5-tetrahydrodipicolinate + acetyl-CoA + H2O = L-2-acetamido-6-oxoheptanedioate + CoA. Its pathway is amino-acid biosynthesis; L-lysine biosynthesis via DAP pathway; LL-2,6-diaminopimelate from (S)-tetrahydrodipicolinate (acetylase route): step 1/3. In terms of biological role, catalyzes the transfer of an acetyl group from acetyl-CoA to tetrahydrodipicolinate. This chain is 2,3,4,5-tetrahydropyridine-2,6-dicarboxylate N-acetyltransferase, found in Listeria innocua serovar 6a (strain ATCC BAA-680 / CLIP 11262).